The primary structure comprises 515 residues: 1-pyrroline-5-carboxylate dehydrogenase (515 aa).

Residues glutamate 286 and cysteine 320 contribute to the active site.

The protein belongs to the aldehyde dehydrogenase family. RocA subfamily.

The catalysed reaction is L-glutamate 5-semialdehyde + NAD(+) + H2O = L-glutamate + NADH + 2 H(+). It participates in amino-acid degradation; L-proline degradation into L-glutamate; L-glutamate from L-proline: step 2/2. This Bacillus anthracis (strain A0248) protein is 1-pyrroline-5-carboxylate dehydrogenase.